The chain runs to 1229 residues: Putative cell division cycle ATPase (1229 aa).

A compositionally biased stretch (low complexity) spans 252–267 (GKKNNNGNVKKGIKNV). Residues 252–315 (GKKNNNGNVK…GGKNNSYYNE (64 aa)) form a disordered region. Residues 268 to 281 (PMDEKSYSPNDHDN) show a composition bias toward basic and acidic residues. A compositionally biased stretch (low complexity) spans 282-314 (NSNNSNNNNNNDNNNSNNNNNNNNGGKNNSYYN). ATP is bound at residue 568-575 (GIPGTGKT). Disordered stretches follow at residues 814–837 (TLLQNDKNEMNKDSSYDKKTDALD) and 860–892 (FSNDDEETKNKNKTNVNQKKKKNPNDKLDKNER). 2 stretches are compositionally biased toward basic and acidic residues: residues 819-837 (DKNEMNKDSSYDKKTDALD) and 882-892 (NPNDKLDKNER). ATP is bound at residue 975-982 (GPPGCGKT).

This sequence belongs to the AAA ATPase family.

This is Putative cell division cycle ATPase from Plasmodium falciparum (isolate 3D7).